The sequence spans 442 residues: Histidine--tRNA ligase (442 aa).

It belongs to the class-II aminoacyl-tRNA synthetase family. As to quaternary structure, homodimer.

The protein localises to the cytoplasm. It catalyses the reaction tRNA(His) + L-histidine + ATP = L-histidyl-tRNA(His) + AMP + diphosphate + H(+). In Helicobacter hepaticus (strain ATCC 51449 / 3B1), this protein is Histidine--tRNA ligase.